A 632-amino-acid polypeptide reads, in one-letter code: Acyl-coenzyme A oxidase-like protein (632 aa).

Thr376–Tyr381 lines the FAD pocket.

Belongs to the acyl-CoA oxidase family. FAD is required as a cofactor.

This chain is Acyl-coenzyme A oxidase-like protein (Acoxl), found in Mus musculus (Mouse).